The primary structure comprises 63 residues: Cecropin-1 (63 aa).

Positions Met1–Thr21 are cleaved as a signal peptide. A propeptide spanning residues Glu22 to Ala23 is cleaved from the precursor. An Arginine amide modification is found at Arg62.

The protein belongs to the cecropin family.

It localises to the secreted. Its function is as follows. Cecropins have lytic and antibacterial activity against several Gram-positive and Gram-negative bacteria. This is Cecropin-1 (CEC1) from Ceratitis capitata (Mediterranean fruit fly).